A 231-amino-acid chain; its full sequence is Glutathione-specific gamma-glutamylcyclotransferase (231 aa).

49–54 (IFGYGS) contacts substrate. Glu127 acts as the Proton acceptor in catalysis.

Belongs to the gamma-glutamylcyclotransferase family. ChaC subfamily.

The catalysed reaction is glutathione = L-cysteinylglycine + 5-oxo-L-proline. Its function is as follows. Catalyzes the cleavage of glutathione into 5-oxo-L-proline and a Cys-Gly dipeptide. Acts specifically on glutathione, but not on other gamma-glutamyl peptides. This chain is Glutathione-specific gamma-glutamylcyclotransferase, found in Escherichia coli (strain K12).